A 200-amino-acid polypeptide reads, in one-letter code: Rho GDP-dissociation inhibitor 2 (200 aa).

The disordered stretch occupies residues 1–40 (MTEKAPEPHVEEDDDELDGKLNYKPPPQKSLKELQEMDKD). The residue at position 2 (threonine 2) is an N-acetylthreonine. Lysine 20 carries the N6-acetyllysine modification. A Phosphotyrosine modification is found at tyrosine 23. Residues lysine 24, lysine 39, lysine 46, lysine 101, and lysine 123 each carry the N6-acetyllysine modification. Residues 30 to 40 (SLKELQEMDKD) are compositionally biased toward basic and acidic residues. Serine 144 bears the Phosphoserine mark. Lysine 174 bears the N6-acetyllysine mark.

Belongs to the Rho GDI family. In terms of assembly, interacts with RHOA. Interacts with RAC1. Interacts with RAC2. Interacts with CDC42.

It is found in the cytoplasm. Its subcellular location is the cytosol. Its function is as follows. Regulates the GDP/GTP exchange reaction of the Rho proteins by inhibiting the dissociation of GDP from them, and the subsequent binding of GTP to them. Regulates reorganization of the actin cytoskeleton mediated by Rho family members. This chain is Rho GDP-dissociation inhibitor 2 (ARHGDIB), found in Bos taurus (Bovine).